The following is a 309-amino-acid chain: HPr kinase/phosphorylase (309 aa).

Residues His-138 and Lys-159 contribute to the active site. Residue 153–160 (GQSGVGKS) participates in ATP binding. Ser-160 is a binding site for Mg(2+). The active-site Proton acceptor; for phosphorylation activity. Proton donor; for dephosphorylation activity is Asp-177. An important for the catalytic mechanism of both phosphorylation and dephosphorylation region spans residues 201–210 (LEIRGLGIIN). Glu-202 lines the Mg(2+) pocket. Arg-243 is a catalytic residue. Residues 264–269 (PVRPGR) are important for the catalytic mechanism of dephosphorylation.

The protein belongs to the HPrK/P family. As to quaternary structure, homohexamer. The cofactor is Mg(2+).

It carries out the reaction [HPr protein]-L-serine + ATP = [HPr protein]-O-phospho-L-serine + ADP + H(+). The enzyme catalyses [HPr protein]-O-phospho-L-serine + phosphate + H(+) = [HPr protein]-L-serine + diphosphate. Functionally, catalyzes the ATP- as well as the pyrophosphate-dependent phosphorylation of a specific serine residue in HPr, a phosphocarrier protein of the phosphoenolpyruvate-dependent sugar phosphotransferase system (PTS). HprK/P also catalyzes the pyrophosphate-producing, inorganic phosphate-dependent dephosphorylation (phosphorolysis) of seryl-phosphorylated HPr (P-Ser-HPr). The two antagonistic activities of HprK/P are regulated by several intracellular metabolites, which change their concentration in response to the absence or presence of rapidly metabolisable carbon sources (glucose, fructose, etc.) in the growth medium. Also phosphorylates/dephosphorylates the HPr-like catabolite repression protein crh on a specific serine residue. Therefore, by controlling the phosphorylation state of HPr and crh, HPrK/P is a sensor enzyme that plays a major role in the regulation of carbon metabolism and sugar transport: it mediates carbon catabolite repression (CCR), and regulates PTS-catalyzed carbohydrate uptake and inducer exclusion. In Bacillus cereus (strain B4264), this protein is HPr kinase/phosphorylase.